We begin with the raw amino-acid sequence, 761 residues long: NADP-dependent malic enzyme (761 aa).

Residues 1–437 (MPGIDKTDRA…QLSARRDPIA (437 aa)) are malic enzyme. Y49 functions as the Proton donor in the catalytic mechanism. K104 acts as the Proton acceptor in catalysis. 3 residues coordinate a divalent metal cation: E146, D147, and D172. NADP(+)-binding positions include 205–208 (AGAA), N297, and N329. Residues 438 to 761 (STLQRIVERV…AAIAAYNAGT (324 aa)) form a phosphate acetyltransferase region.

The protein in the N-terminal section; belongs to the malic enzymes family. This sequence in the C-terminal section; belongs to the phosphate acetyltransferase and butyryltransferase family. Homooctamer. Mg(2+) serves as cofactor. It depends on Mn(2+) as a cofactor.

It catalyses the reaction (S)-malate + NADP(+) = pyruvate + CO2 + NADPH. The enzyme catalyses oxaloacetate + H(+) = pyruvate + CO2. The polypeptide is NADP-dependent malic enzyme (tme) (Rhizobium meliloti (strain 1021) (Ensifer meliloti)).